The following is a 396-amino-acid chain: Glideosome-associated protein 50 (396 aa).

The Lumenal segment spans residues methionine 1–arginine 369. 2 residues coordinate a metal cation: histidine 195 and histidine 256. A helical membrane pass occupies residues valine 370–phenylalanine 390. Over leucine 391–lysine 396 the chain is Cytoplasmic.

It belongs to the metallophosphoesterase superfamily. Purple acid phosphatase family. As to quaternary structure, component of the glideosome complex composed of GAP50, GAP45, MTIP and MyoA; the complex is formed during the late schizont stage and in merozoites. MyoA, MTIP and GAP45 probably form an initial complex in the cytoplasm which is then recruited to the outer face of the inner membrane complex via the interaction with GAP50. Interacts with GAP45; the interaction is independent of GAP45 phosphorylation status and can also occur independently of the formation of the glideosome complex. Interacts with human factor H isoform CFH (via sushi 6-7 domains) and isoform FHL-1 (via sushi 6-7 domains); the interaction occurs in the vector mosquito midgut at the surface of activated gametocytes; the interaction protects the parasite from alternative complement pathway-mediated elimination. The cofactor is a metal cation. In terms of processing, the N-terminus signal is likely to be cleaved.

It is found in the inner membrane complex. It localises to the cell membrane. Its subcellular location is the endoplasmic reticulum membrane. The catalysed reaction is a phosphate monoester + H2O = an alcohol + phosphate. Activity is independent of metal ions. Functionally, component of the glideosome complex, an inner membrane complex structure involved in parasite gliding motility and host cell invasion. During the asexual blood stage, may play a role in the assembly and anchoring of the glideosome complex to the inner membrane complex. During the sexual stage in the vector mosquito midgut, protects gametocytes against host alternative complement pathway-mediated elimination by interacting with host complement inhibitor factor H. Has phosphatase activity towards nucleotides such as ATP, vitamins B1 and B6, phosphorylated sugars, glycerol phosphates and inositol triphosphates. However, the phosphatase activity is controversial. This chain is Glideosome-associated protein 50, found in Plasmodium falciparum (isolate 3D7).